We begin with the raw amino-acid sequence, 235 residues long: Octanoyltransferase (235 aa).

In terms of domain architecture, BPL/LPL catalytic spans 28–203 (GRAEETLLLL…PFAGLPADAL (176 aa)). Residues 66-73 (RGGDVTWH), 133-135 (SIG), and 146-148 (GFA) contribute to the substrate site. Cysteine 164 acts as the Acyl-thioester intermediate in catalysis. Positions 202–235 (ALPEQPRDAVQPSSCDDVHAPSTTSRRPPCPLTV) are disordered.

Belongs to the LipB family.

The protein resides in the cytoplasm. It carries out the reaction octanoyl-[ACP] + L-lysyl-[protein] = N(6)-octanoyl-L-lysyl-[protein] + holo-[ACP] + H(+). The protein operates within protein modification; protein lipoylation via endogenous pathway; protein N(6)-(lipoyl)lysine from octanoyl-[acyl-carrier-protein]: step 1/2. Functionally, catalyzes the transfer of endogenously produced octanoic acid from octanoyl-acyl-carrier-protein onto the lipoyl domains of lipoate-dependent enzymes. Lipoyl-ACP can also act as a substrate although octanoyl-ACP is likely to be the physiological substrate. This is Octanoyltransferase from Geobacter sulfurreducens (strain ATCC 51573 / DSM 12127 / PCA).